A 156-amino-acid chain; its full sequence is Small ribosomal subunit protein uS7 (156 aa).

This sequence belongs to the universal ribosomal protein uS7 family. As to quaternary structure, part of the 30S ribosomal subunit. Contacts proteins S9 and S11.

One of the primary rRNA binding proteins, it binds directly to 16S rRNA where it nucleates assembly of the head domain of the 30S subunit. Is located at the subunit interface close to the decoding center, probably blocks exit of the E-site tRNA. This is Small ribosomal subunit protein uS7 from Teredinibacter turnerae (strain ATCC 39867 / T7901).